The following is a 642-amino-acid chain: A-kinase anchor protein 8-like (642 aa).

The interval 1 to 269 is sufficient for activation of CTE-mediated expression; sequence MSYTGFVQGS…MRRTWKTWTT (269 aa). R209 bears the Asymmetric dimethylarginine; alternate mark. R209 is subject to Omega-N-methylarginine; alternate. Omega-N-methylarginine occurs at positions 218, 238, and 248. N6-acetyllysine is present on K258. Residues 265–382 are disordered; that stretch reads KTWTTADFRT…QDKQKKRQRD (118 aa). T268 bears the Phosphothreonine mark. A Nuclear localization signal motif is present at residues 275–280; that stretch reads KKKKRK. The short motif at 281 to 297 is the Nuclear export signal (NES) element; that stretch reads QGGSPDEPDSKATRTDC. S284 carries the phosphoserine modification. A compositionally biased stretch (basic and acidic residues) spans 288-297; the sequence is PDSKATRTDC. T293 carries the phosphothreonine modification. S298 is subject to Phosphoserine. Acidic residues predominate over residues 299–315; that stretch reads DNSDSDNDEGTEGEAAE. Residues 338 to 350 show a composition bias toward basic and acidic residues; that stretch reads EDGREEGKEDPEK. Positions 363–365 match the Nuclear localization signal motif; the sequence is KRK. 2 C2H2 AKAP95-type zinc fingers span residues 392–414 and 485–508; these read CSLC…SKFH and CAAC…TMDH. Residues 546–642 are disordered; that stretch reads GENPFTDNPE…EDDEEGGGGP (97 aa). The segment covering 553-564 has biased composition (acidic residues); it reads NPEEEKEQDEVE. Pro residues predominate over residues 585-605; that stretch reads AQPPVPLEPAPGTTTPPPPPP. The span at 631–642 shows a compositional bias: acidic residues; sequence DMEDDEEGGGGP.

The protein belongs to the AKAP95 family. In terms of assembly, interacts (via N-terminus) with DHX9 (via RGG region). Interacts with TMPO isoform Beta, PRPF40A, RNF43, lamin-B. Interacts with HDAC3; increased during mitosis. Post-translationally, phosphorylated on serine or threonine residues possibly by PKA.

It is found in the nucleus. Its subcellular location is the nucleus matrix. It localises to the nucleus speckle. The protein localises to the PML body. The protein resides in the cytoplasm. Its function is as follows. Could play a role in constitutive transport element (CTE)-mediated gene expression by association with DHX9. Increases CTE-dependent nuclear unspliced mRNA export. Proposed to target PRKACA to the nucleus but does not seem to be implicated in the binding of regulatory subunit II of PKA. May be involved in nuclear envelope breakdown and chromatin condensation. May be involved in anchoring nuclear membranes to chromatin in interphase and in releasing membranes from chromating at mitosis. May regulate the initiation phase of DNA replication when associated with TMPO isoform Beta. Required for cell cycle G2/M transition and histone deacetylation during mitosis. In mitotic cells recruits HDAC3 to the vicinity of chromatin leading to deacetylation and subsequent phosphorylation at 'Ser-10' of histone H3; in this function seems to act redundantly with AKAP8. May be involved in regulation of pre-mRNA splicing. This chain is A-kinase anchor protein 8-like (Akap8l), found in Mus musculus (Mouse).